Reading from the N-terminus, the 293-residue chain is tRNA pseudouridine synthase B (293 aa).

The active-site Nucleophile is aspartate 40.

The protein belongs to the pseudouridine synthase TruB family. Type 1 subfamily.

The enzyme catalyses uridine(55) in tRNA = pseudouridine(55) in tRNA. In terms of biological role, responsible for synthesis of pseudouridine from uracil-55 in the psi GC loop of transfer RNAs. The polypeptide is tRNA pseudouridine synthase B (Rickettsia akari (strain Hartford)).